Consider the following 233-residue polypeptide: 2,3-bisphosphoglycerate-dependent phosphoglycerate mutase (233 aa).

Substrate contacts are provided by residues 8–15, 21–22, R60, 87–90, K98, 114–115, and 183–184; these read RHGESEWN, TG, ERHY, RR, and GN. H9 functions as the Tele-phosphohistidine intermediate in the catalytic mechanism. E87 acts as the Proton donor/acceptor in catalysis.

Belongs to the phosphoglycerate mutase family. BPG-dependent PGAM subfamily.

The catalysed reaction is (2R)-2-phosphoglycerate = (2R)-3-phosphoglycerate. Its pathway is carbohydrate degradation; glycolysis; pyruvate from D-glyceraldehyde 3-phosphate: step 3/5. Catalyzes the interconversion of 2-phosphoglycerate and 3-phosphoglycerate. The chain is 2,3-bisphosphoglycerate-dependent phosphoglycerate mutase from Lactococcus lactis subsp. cremoris (strain MG1363).